The primary structure comprises 455 residues: GTPase Der (455 aa).

EngA-type G domains follow at residues 4–169 (PVVA…PPKD) and 178–353 (IQMA…EQHR). GTP-binding positions include 10-17 (GRPNVGKS), 57-61 (DTGGL), 120-123 (NKCE), 184-191 (GRPNVGKS), 231-235 (DTAGI), and 296-299 (NKWD). Residues 354-439 (RRVSTSVVNE…PVKLYWRGKQ (86 aa)) form the KH-like domain.

This sequence belongs to the TRAFAC class TrmE-Era-EngA-EngB-Septin-like GTPase superfamily. EngA (Der) GTPase family. In terms of assembly, associates with the 50S ribosomal subunit.

In terms of biological role, GTPase that plays an essential role in the late steps of ribosome biogenesis. This chain is GTPase Der, found in Parasynechococcus marenigrum (strain WH8102).